Here is a 229-residue protein sequence, read N- to C-terminus: GTP cyclohydrolase 1 (229 aa).

C116, H119, and C187 together coordinate Zn(2+).

Belongs to the GTP cyclohydrolase I family. In terms of assembly, toroid-shaped homodecamer, composed of two pentamers of five dimers.

It catalyses the reaction GTP + H2O = 7,8-dihydroneopterin 3'-triphosphate + formate + H(+). It participates in cofactor biosynthesis; 7,8-dihydroneopterin triphosphate biosynthesis; 7,8-dihydroneopterin triphosphate from GTP: step 1/1. The sequence is that of GTP cyclohydrolase 1 from Synechococcus sp. (strain JA-3-3Ab) (Cyanobacteria bacterium Yellowstone A-Prime).